The following is a 122-amino-acid chain: MKILTRIPRRLLPWLLGGALALVAVSFAPALLSHETVVQIRVANSGTPLPDGFYLYQQLSAQGVRIKSITPSGDALVIHFENEEQSLAAQKVLRRLLPQGFVVAAGHQASQQNQDANRSIYS.

The Cytoplasmic segment spans residues 1 to 10 (MKILTRIPRR). Residues 11–31 (LLPWLLGGALALVAVSFAPAL) form a helical membrane-spanning segment. At 32 to 122 (LSHETVVQIR…NQDANRSIYS (91 aa)) the chain is on the periplasmic side.

Belongs to the MzrA family. Interacts with EnvZ.

The protein resides in the cell inner membrane. Modulates the activity of the EnvZ/OmpR two-component regulatory system, probably by directly modulating EnvZ enzymatic activity and increasing stability of phosphorylated OmpR. This is Modulator protein MzrA from Pantoea sp. (strain At-9b).